Reading from the N-terminus, the 177-residue chain is Large ribosomal subunit protein uL5m (177 aa).

It belongs to the universal ribosomal protein uL5 family.

The protein resides in the mitochondrion. This is Large ribosomal subunit protein uL5m (RPL5) from Acanthamoeba castellanii (Amoeba).